The primary structure comprises 120 residues: UPF0102 protein Moth_0988 (120 aa).

It belongs to the UPF0102 family.

The chain is UPF0102 protein Moth_0988 from Moorella thermoacetica (strain ATCC 39073 / JCM 9320).